Reading from the N-terminus, the 177-residue chain is Platelet glycoprotein IX (177 aa).

The N-terminal stretch at 1–16 is a signal peptide; sequence MPAWGALFLLWATAEA. One can recognise an LRRNT domain in the interval 17 to 51; the sequence is TKDCPSPCTCRALETMGLWVDCRGHGLTALPALPA. The Extracellular portion of the chain corresponds to 17-147; it reads TKDCPSPCTC…QLQASWVRPG (131 aa). N-linked (GlcNAc...) asparagine glycosylation is present at Asn60. The LRR repeat unit spans residues 60-83; sequence NNSLQSVPPGAFDHLPQLQTLDVT. The 53-residue stretch at 85 to 137 folds into the LRRCT domain; sequence NPWHCDCSLTYLRLWLEDRTPEALLQVRCASPSLAAHGPLGRLTGYQLGSCGW. The chain crosses the membrane as a helical span at residues 148–168; sequence VLWDVALVAVAALGLALLAGL. Over 169–177 the chain is Cytoplasmic; the sequence is LCATTEALD.

In terms of assembly, two GP-Ib beta are disulfide-linked to one GP-Ib alpha. GP-IX is complexed with the GP-Ib heterodimer via a non covalent linkage.

The protein localises to the membrane. The GPIb-V-IX complex functions as the vWF receptor and mediates vWF-dependent platelet adhesion to blood vessels. The adhesion of platelets to injured vascular surfaces in the arterial circulation is a critical initiating event in hemostasis. GP-IX may provide for membrane insertion and orientation of GP-Ib. The sequence is that of Platelet glycoprotein IX (GP9) from Homo sapiens (Human).